Consider the following 148-residue polypeptide: Large ribosomal subunit protein bL9 (148 aa).

Belongs to the bacterial ribosomal protein bL9 family.

In terms of biological role, binds to the 23S rRNA. This is Large ribosomal subunit protein bL9 from Sulfurimonas denitrificans (strain ATCC 33889 / DSM 1251) (Thiomicrospira denitrificans (strain ATCC 33889 / DSM 1251)).